The following is a 212-amino-acid chain: MTRPIVIAIDGPAASGKGTLARRLAAAFNLPYLDTGLLYRAVARRVLDRGGDPADPAASEEQARSLSRLDLERGDLRTPEVDRAASAVASIKPVRAALLDFQRRFADASGAVLDGRDIGTIVFPEADVKLFVTASLDVRAKRRHLERLAHGIDPGFDSVRAELAARDEADRTRAAAPLVQAKDALLLDTSQMDANHAFTAAADLVNKVLARG.

An ATP-binding site is contributed by 11–19; it reads GPAASGKGT. Residues 50-69 are disordered; the sequence is GGDPADPAASEEQARSLSRL.

This sequence belongs to the cytidylate kinase family. Type 1 subfamily.

The protein resides in the cytoplasm. It carries out the reaction CMP + ATP = CDP + ADP. The catalysed reaction is dCMP + ATP = dCDP + ADP. This is Cytidylate kinase from Acidiphilium cryptum (strain JF-5).